The chain runs to 460 residues: Argininosuccinate lyase (460 aa).

This sequence belongs to the lyase 1 family. Argininosuccinate lyase subfamily.

The protein localises to the cytoplasm. The catalysed reaction is 2-(N(omega)-L-arginino)succinate = fumarate + L-arginine. It participates in amino-acid biosynthesis; L-arginine biosynthesis; L-arginine from L-ornithine and carbamoyl phosphate: step 3/3. The sequence is that of Argininosuccinate lyase from Campylobacter hominis (strain ATCC BAA-381 / DSM 21671 / CCUG 45161 / LMG 19568 / NCTC 13146 / CH001A).